Consider the following 493-residue polypeptide: MFKFALTLTLCLAGSLSLAQHNPHWWGNRNTIVHLFEWKWSDIAQECESFLGPRGFAGVQVSPVNENILSAGRPWWERYQPISYKLTTRSGNEEEFGDMVRRCNDVGVRIYVDVLLNHMSGDFDGVAVGTAGTEAEPSKKSFPGVPYTAQDFHPTCEITDWNDRFQVQQCELVGLKDLDQSSDWVRSKLIEFLDHLIELGVAGFRVDAAKHMASEDLEYIYSSLSNLNIDHGFPHNSRPFIFQEVIDHGHETVSRDEYKDLGAVTEFRFSEEIGNAFRGNNALKWLQSWGTDWGFLPSGQALTFVDNHDNQRDAGAVLNYKSPRQYKMATAFHLAYPYGISRVMSSFAFDDHDTPPPQDAQERIISPEFDADGACVNGWICEHRWRQIYAMVGFKNAVRDTEITGWWDNGDNQISFCRGNKGFLAINNNLYDLSQDLNTCLPAGTYCDVISGSLIDGSCTGKSVTVNENGYGYIHIGSDDFDGVLALHVDAKV.

Residues 1–19 (MFKFALTLTLCLAGSLSLA) form the signal peptide. Position 20 is a pyrrolidone carboxylic acid (Q20). An intrachain disulfide couples C47 to C103. Ca(2+) contacts are provided by N117, Q168, and D177. C156 and C170 are joined by a disulfide. Position 205 (R205) interacts with chloride. Catalysis depends on D207, which acts as the Nucleophile. Position 211 (H211) interacts with Ca(2+). The active-site Proton donor is the E244. N307 and R342 together coordinate chloride. 3 cysteine pairs are disulfide-bonded: C375-C381, C417-C440, and C447-C459.

The protein belongs to the glycosyl hydrolase 13 family. As to quaternary structure, monomer. Requires Ca(2+) as cofactor. Chloride is required as a cofactor. As to expression, midgut and fat body.

Its subcellular location is the secreted. It carries out the reaction Endohydrolysis of (1-&gt;4)-alpha-D-glucosidic linkages in polysaccharides containing three or more (1-&gt;4)-alpha-linked D-glucose units.. The sequence is that of Alpha-amylase-related protein (Amyrel) from Drosophila melanogaster (Fruit fly).